The chain runs to 200 residues: Cell division protein SepF (200 aa).

Disordered regions lie at residues 35-60 (NLYQ…RWRE) and 170-200 (LHEV…RMAQ). The segment covering 183-200 (PTGSPNQTWGNETNRMAQ) has biased composition (polar residues).

The protein belongs to the SepF family. Homodimer. Interacts with FtsZ.

It is found in the cytoplasm. In terms of biological role, cell division protein that is part of the divisome complex and is recruited early to the Z-ring. Probably stimulates Z-ring formation, perhaps through the cross-linking of FtsZ protofilaments. Its function overlaps with FtsA. This chain is Cell division protein SepF, found in Nostoc punctiforme (strain ATCC 29133 / PCC 73102).